The sequence spans 365 residues: UDP-N-acetylglucosamine--N-acetylmuramyl-(pentapeptide) pyrophosphoryl-undecaprenol N-acetylglucosamine transferase (365 aa).

Residues threonine 10–glycine 12, asparagine 124, arginine 161, serine 195, isoleucine 248, and glutamine 292 each bind UDP-N-acetyl-alpha-D-glucosamine.

This sequence belongs to the glycosyltransferase 28 family. MurG subfamily.

Its subcellular location is the cell membrane. The catalysed reaction is di-trans,octa-cis-undecaprenyl diphospho-N-acetyl-alpha-D-muramoyl-L-alanyl-D-glutamyl-meso-2,6-diaminopimeloyl-D-alanyl-D-alanine + UDP-N-acetyl-alpha-D-glucosamine = di-trans,octa-cis-undecaprenyl diphospho-[N-acetyl-alpha-D-glucosaminyl-(1-&gt;4)]-N-acetyl-alpha-D-muramoyl-L-alanyl-D-glutamyl-meso-2,6-diaminopimeloyl-D-alanyl-D-alanine + UDP + H(+). It participates in cell wall biogenesis; peptidoglycan biosynthesis. Cell wall formation. Catalyzes the transfer of a GlcNAc subunit on undecaprenyl-pyrophosphoryl-MurNAc-pentapeptide (lipid intermediate I) to form undecaprenyl-pyrophosphoryl-MurNAc-(pentapeptide)GlcNAc (lipid intermediate II). The sequence is that of UDP-N-acetylglucosamine--N-acetylmuramyl-(pentapeptide) pyrophosphoryl-undecaprenol N-acetylglucosamine transferase from Nocardioides sp. (strain ATCC BAA-499 / JS614).